We begin with the raw amino-acid sequence, 441 residues long: 23S rRNA (uracil(1939)-C(5))-methyltransferase RlmD (441 aa).

Positions 10 to 68 (KPLKQQSLVLDITAMDHHGRGIAKHNNKVCFVSNALPNEQVKATIIADKARYSEAQTHK) constitute a TRAM domain. Residues Cys81, Cys87, Cys90, and Cys169 each contribute to the [4Fe-4S] cluster site. The S-adenosyl-L-methionine site is built by Gln274, Phe303, Asn308, Glu324, Asp351, and Asp372. Residue Cys398 is the Nucleophile of the active site.

It belongs to the class I-like SAM-binding methyltransferase superfamily. RNA M5U methyltransferase family. RlmD subfamily.

The catalysed reaction is uridine(1939) in 23S rRNA + S-adenosyl-L-methionine = 5-methyluridine(1939) in 23S rRNA + S-adenosyl-L-homocysteine + H(+). Functionally, catalyzes the formation of 5-methyl-uridine at position 1939 (m5U1939) in 23S rRNA. The protein is 23S rRNA (uracil(1939)-C(5))-methyltransferase RlmD of Pseudoalteromonas translucida (strain TAC 125).